The chain runs to 74 residues: Translational regulator CsrA (74 aa).

Belongs to the CsrA/RsmA family. In terms of assembly, homodimer; the beta-strands of each monomer intercalate to form a hydrophobic core, while the alpha-helices form wings that extend away from the core.

It is found in the cytoplasm. Functionally, a translational regulator that binds mRNA to regulate translation initiation and/or mRNA stability. Usually binds in the 5'-UTR at or near the Shine-Dalgarno sequence preventing ribosome-binding, thus repressing translation. Its main target seems to be the major flagellin gene, while its function is anatagonized by FliW. The chain is Translational regulator CsrA from Alkaliphilus oremlandii (strain OhILAs) (Clostridium oremlandii (strain OhILAs)).